Reading from the N-terminus, the 999-residue chain is MTPGRRSSTFTRLLRHGFTDPSAAERLLDGAGLAELRADPVLLEALGATADPDLALHGLVRLLEAQPDATARQELLDTLIAAKPLRDRLLGVLGASEALADHLARHAGDWQTLVTYEPRDLHRGVEEFERGLAEATDPVTLRVAYRRCLLSIAARDVCGTIDVAETAAELADLAIATLRAALALAEAAAPEDAARCRLAVIAMGKCGGHELNYVSDVDVIFVGEAADTGPDADEAKAMRAATSLAAHMMRICSETTVEGSIWPVDANLRPEGRNGPLVRTLSSHVAYYQRWAKTWEFQALLKARPVAGDPGLGAEYVAALQPLVWQAADRENFVPDVQKMRRRVVENIPLTEVDRQLKLGPGGLRDVEFAVQLLQLVHGRADTSLHSGTTLDALEALAAGGYVGRTDAAQLDEAYRFLRSMEHRIQLHRLRRTHLVPEDEADLRRLGRSLGLRTDPVTGLLRAWKRHASVVRRLHEKLFYRPLLDAVAQLAPGEARLSPEAARERLVALGYADPAAALRHLEALASGVTRKAAIQRTLLPVLLGWFADSADPDTGLLNFRKVSDALGTTPWYLRLLRDEGAAAENLARVLSAGRLAPDLLMRAPEAVALLGDGVAGGLRPRDRAQLEQETLAAVRRADDAVQAVTAVRGVRRRELFRTAAADIVGSYGTETQPVEADQGALVDLVGGAVSDLTSATLAGTLRAVVREKWGDVLPTRFAIIGMGRFGGHELGYGSDADVLFVHEPRDGVAEREAGDAANKVVSEMRRLLQVPSADPPLLIDADLRPEGRSGPLVRTLKSYEAYYRRWSLGWESHALLRAEFVAGDEELGRRFIELIDPLRYPEGGLGEDAVREIRRLKARMESERLPRGADPKLHAKLGPGGLSDVEWTVQLLQLRHGHEIAGLRTTRTRTALAAARDAGLISEEHTATLDEAWVLATRVRNAVMLVRGRAGDTFPTDPRELAAVGRYLGHGSGHAGDMLDEYRRTARRARTVVEDLFYA.

The interval 1 to 483 is adenylyl removase; that stretch reads MTPGRRSSTF…LHEKLFYRPL (483 aa). The adenylyl transferase stretch occupies residues 489-999; it reads QLAPGEARLS…RTVVEDLFYA (511 aa).

This sequence belongs to the GlnE family. Requires Mg(2+) as cofactor.

It catalyses the reaction [glutamine synthetase]-O(4)-(5'-adenylyl)-L-tyrosine + phosphate = [glutamine synthetase]-L-tyrosine + ADP. It carries out the reaction [glutamine synthetase]-L-tyrosine + ATP = [glutamine synthetase]-O(4)-(5'-adenylyl)-L-tyrosine + diphosphate. Functionally, adenylation and deadenylation of glutamate--ammonia ligase. Its function is as follows. Involved in the regulation of glutamine synthetase GlnA, a key enzyme in the process to assimilate ammonia. When cellular nitrogen levels are high, the C-terminal adenylyl transferase (AT) inactivates GlnA by covalent transfer of an adenylyl group from ATP to specific tyrosine residue of GlnA, thus reducing its activity. Conversely, when nitrogen levels are low, the N-terminal adenylyl removase (AR) activates GlnA by removing the adenylyl group by phosphorolysis, increasing its activity. The regulatory region of GlnE binds the signal transduction protein PII (GlnB) which indicates the nitrogen status of the cell. This Streptomyces coelicolor (strain ATCC BAA-471 / A3(2) / M145) protein is Bifunctional glutamine synthetase adenylyltransferase/adenylyl-removing enzyme.